The following is a 169-amino-acid chain: uncharacterized protein (169 aa).

The chain crosses the membrane as a helical span at residues 55–77 (SLFIFKAVMILHTCLIVKSIRIF).

The protein localises to the membrane. This is an uncharacterized protein from Saccharomyces cerevisiae (strain ATCC 204508 / S288c) (Baker's yeast).